The chain runs to 335 residues: Ketol-acid reductoisomerase (NAD(P)(+)) (335 aa).

The 181-residue stretch at 5-185 (AKIYTDKDTT…GGTRAGAIET (181 aa)) folds into the KARI N-terminal Rossmann domain. NADP(+) is bound by residues 28–31 (YGSQ), arginine 52, serine 56, and 86–89 (DMAQ). Histidine 111 is a catalytic residue. NADP(+) is bound at residue glycine 137. A KARI C-terminal knotted domain is found at 186–331 (TFKEETETDL…RRLKEIIERG (146 aa)). Mg(2+) contacts are provided by aspartate 194, glutamate 198, glutamate 230, and glutamate 234. Position 255 (serine 255) interacts with substrate. Residues 301 to 335 (GSPTLSKGLEEMDKSLEEQTGRRLKEIIERGRPKS) are disordered. Residues 308-335 (GLEEMDKSLEEQTGRRLKEIIERGRPKS) are compositionally biased toward basic and acidic residues.

It belongs to the ketol-acid reductoisomerase family. It depends on Mg(2+) as a cofactor.

It carries out the reaction (2R)-2,3-dihydroxy-3-methylbutanoate + NAD(+) = (2S)-2-acetolactate + NADH + H(+). The enzyme catalyses (2R)-2,3-dihydroxy-3-methylbutanoate + NADP(+) = (2S)-2-acetolactate + NADPH + H(+). It participates in amino-acid biosynthesis; L-isoleucine biosynthesis; L-isoleucine from 2-oxobutanoate: step 2/4. It functions in the pathway amino-acid biosynthesis; L-valine biosynthesis; L-valine from pyruvate: step 2/4. Involved in the biosynthesis of branched-chain amino acids (BCAA). Catalyzes an alkyl-migration followed by a ketol-acid reduction of (S)-2-acetolactate (S2AL) to yield (R)-2,3-dihydroxy-isovalerate. In the isomerase reaction, S2AL is rearranged via a Mg-dependent methyl migration to produce 3-hydroxy-3-methyl-2-ketobutyrate (HMKB). In the reductase reaction, this 2-ketoacid undergoes a metal-dependent reduction by NADPH or NADH to yield (R)-2,3-dihydroxy-isovalerate. This chain is Ketol-acid reductoisomerase (NAD(P)(+)), found in Metallosphaera sedula (strain ATCC 51363 / DSM 5348 / JCM 9185 / NBRC 15509 / TH2).